Consider the following 300-residue polypeptide: NAD kinase (300 aa).

The Proton acceptor role is filled by aspartate 75. NAD(+) is bound by residues 75 to 76 (DG), 149 to 150 (ND), arginine 177, aspartate 179, 190 to 195 (TAYALS), alanine 214, and glutamine 248.

Belongs to the NAD kinase family. It depends on a divalent metal cation as a cofactor.

Its subcellular location is the cytoplasm. The enzyme catalyses NAD(+) + ATP = ADP + NADP(+) + H(+). Functionally, involved in the regulation of the intracellular balance of NAD and NADP, and is a key enzyme in the biosynthesis of NADP. Catalyzes specifically the phosphorylation on 2'-hydroxyl of the adenosine moiety of NAD to yield NADP. This is NAD kinase from Burkholderia vietnamiensis (strain G4 / LMG 22486) (Burkholderia cepacia (strain R1808)).